A 719-amino-acid chain; its full sequence is Plasmin and fibronectin-binding protein A (719 aa).

The N-terminal stretch at 1 to 45 (MLKIVKKLEVLMKYFVPNEVFSIRKLKVGTCSVLLAISILGSQGI) is a signal peptide. Disordered stretches follow at residues 56–76 (PMATKESSNAITNDLDNSPTV) and 109–128 (IRSNSQLDNRTVESTVTSTN). PbH1 repeat units lie at residues 287 to 310 (SNNVTIKNVTFKDSYQGHAIQIAG), 362 to 384 (SENVTIQNSYFGKSDKSGELVTA), 397 to 419 (PSNIKILNNHFDNMMYAGVRFTG), 497 to 523 (VSDITVTKNVINNNSKETEQPNIELLR), and 525 to 546 (SDNLVVSENSIFGGKEGIVIED). Residues 601 to 658 (NNLSDKNEKEKNKEEKQSNSNNVIDSNQKNGEFNSSKDNRQMNDKIDNKQDNKTEEVN) adopt a coiled-coil conformation. The segment covering 606–617 (KNEKEKNKEEKQ) has biased composition (basic and acidic residues). The disordered stretch occupies residues 606 to 655 (KNEKEKNKEEKQSNSNNVIDSNQKNGEFNSSKDNRQMNDKIDNKQDNKTE). Polar residues predominate over residues 623-634 (VIDSNQKNGEFN). The span at 635–655 (SSKDNRQMNDKIDNKQDNKTE) shows a compositional bias: basic and acidic residues. An LPXTG sorting signal motif is present at residues 685 to 689 (LPKTG). At T688 the chain carries Pentaglycyl murein peptidoglycan amidated threonine. A propeptide spans 689 to 719 (GSNKIMELFLTVTGIGLLLTLKGLKYYGKDK) (removed by sortase).

It localises to the secreted. Its subcellular location is the cell wall. Functionally, acts as a fibronectin-dependent adhesin and invasin. Binds host (in this case human) fibronectin, plasmin, plasminogen, and human serum albumin. Where the bacteria adhere to human cells there is major recruitment of microvilli which seem to fuse to cover the streptococcal chains. Antibodies to this protein reduce bacterial growth in human blood. The sequence is that of Plasmin and fibronectin-binding protein A (pfbA) from Streptococcus pneumoniae (strain ATCC BAA-255 / R6).